The chain runs to 489 residues: Transcription factor TGAL11 (489 aa).

Residues 87 to 99 are compositionally biased toward low complexity; it reads AATATATARPPAT. The segment at 87–181 is disordered; it reads AATATATARP…SDHRMTKTLD (95 aa). Polar residues predominate over residues 121 to 139; it reads SNVTADTTDSESSSKNNGD. Residues 148-159 are compositionally biased toward low complexity; it reads ASQFDQIPQQQQ. Positions 171–181 are enriched in basic and acidic residues; the sequence is HSDHRMTKTLD. Positions 181 to 225 constitute a bZIP domain; sequence DPKIMRRLAQNREAARKSRLRKKAYIQQLESSKLRLAQMEQDLER. Residues 183 to 203 are basic motif; the sequence is KIMRRLAQNREAARKSRLRKK. Residues 209–223 are leucine-zipper; the sequence is LESSKLRLAQMEQDL. One can recognise a DOG1 domain in the interval 245–460; it reads AAMFDAEYGR…RALSSLWASR (216 aa).

This sequence belongs to the bZIP family.

Its subcellular location is the nucleus. In terms of biological role, transcriptional regulator involved in defense response. The sequence is that of Transcription factor TGAL11 from Oryza sativa subsp. japonica (Rice).